A 194-amino-acid polypeptide reads, in one-letter code: Translation machinery-associated protein 22 (194 aa).

The 72-residue stretch at 102 to 173 (VQIKRVERNK…DVQEWLLEVY (72 aa)) folds into the SUI1 domain.

Belongs to the DENR family. As to quaternary structure, interacts with the 40S ribosomal subunit.

It localises to the cytoplasm. The protein is Translation machinery-associated protein 22 (tma22) of Aspergillus clavatus (strain ATCC 1007 / CBS 513.65 / DSM 816 / NCTC 3887 / NRRL 1 / QM 1276 / 107).